Here is a 247-residue protein sequence, read N- to C-terminus: Adenosylcobinamide-GDP ribazoletransferase (247 aa).

The next 5 membrane-spanning stretches (helical) occupy residues 34–54, 59–79, 113–133, 138–158, and 194–214; these read IITFPLIGLLLGAISGLVFMV, CGAPLAALFSVLVLVLMTGGF, GGLALIFVVLAKILVLSELAL, ILASLAAACAVSRGTAALLMY, and VLLPGMHGVAAMVVTMVAIFI.

It belongs to the CobS family. The cofactor is Mg(2+).

Its subcellular location is the cell inner membrane. The enzyme catalyses alpha-ribazole + adenosylcob(III)inamide-GDP = adenosylcob(III)alamin + GMP + H(+). It catalyses the reaction alpha-ribazole 5'-phosphate + adenosylcob(III)inamide-GDP = adenosylcob(III)alamin 5'-phosphate + GMP + H(+). The protein operates within cofactor biosynthesis; adenosylcobalamin biosynthesis; adenosylcobalamin from cob(II)yrinate a,c-diamide: step 7/7. Functionally, joins adenosylcobinamide-GDP and alpha-ribazole to generate adenosylcobalamin (Ado-cobalamin). Also synthesizes adenosylcobalamin 5'-phosphate from adenosylcobinamide-GDP and alpha-ribazole 5'-phosphate. The chain is Adenosylcobinamide-GDP ribazoletransferase from Escherichia coli O157:H7.